A 94-amino-acid chain; its full sequence is DNA-binding protein HU (94 aa).

The protein belongs to the bacterial histone-like protein family.

Histone-like DNA-binding protein which is capable of wrapping DNA to stabilize it, and thus to prevent its denaturation under extreme environmental conditions. This Xylella fastidiosa (strain 9a5c) protein is DNA-binding protein HU (hup).